Consider the following 335-residue polypeptide: Holliday junction branch migration complex subunit RuvB (335 aa).

The interval 4 to 184 (ADRLVSAEVL…FGIVQRLEFY (181 aa)) is large ATPase domain (RuvB-L). ATP-binding positions include isoleucine 23, arginine 24, glycine 65, lysine 68, threonine 69, threonine 70, 131-133 (EDY), arginine 174, tyrosine 184, and arginine 221. Residue threonine 69 participates in Mg(2+) binding. The segment at 185–255 (NVDDLQSIVS…IATRALDMLS (71 aa)) is small ATPAse domain (RuvB-S). Positions 258–335 (AAGFDYLDRK…RHFGMVRNQE (78 aa)) are head domain (RuvB-H). DNA is bound by residues arginine 294, arginine 313, and arginine 318.

It belongs to the RuvB family. In terms of assembly, homohexamer. Forms an RuvA(8)-RuvB(12)-Holliday junction (HJ) complex. HJ DNA is sandwiched between 2 RuvA tetramers; dsDNA enters through RuvA and exits via RuvB. An RuvB hexamer assembles on each DNA strand where it exits the tetramer. Each RuvB hexamer is contacted by two RuvA subunits (via domain III) on 2 adjacent RuvB subunits; this complex drives branch migration. In the full resolvosome a probable DNA-RuvA(4)-RuvB(12)-RuvC(2) complex forms which resolves the HJ.

The protein localises to the cytoplasm. It catalyses the reaction ATP + H2O = ADP + phosphate + H(+). The RuvA-RuvB-RuvC complex processes Holliday junction (HJ) DNA during genetic recombination and DNA repair, while the RuvA-RuvB complex plays an important role in the rescue of blocked DNA replication forks via replication fork reversal (RFR). RuvA specifically binds to HJ cruciform DNA, conferring on it an open structure. The RuvB hexamer acts as an ATP-dependent pump, pulling dsDNA into and through the RuvAB complex. RuvB forms 2 homohexamers on either side of HJ DNA bound by 1 or 2 RuvA tetramers; 4 subunits per hexamer contact DNA at a time. Coordinated motions by a converter formed by DNA-disengaged RuvB subunits stimulates ATP hydrolysis and nucleotide exchange. Immobilization of the converter enables RuvB to convert the ATP-contained energy into a lever motion, pulling 2 nucleotides of DNA out of the RuvA tetramer per ATP hydrolyzed, thus driving DNA branch migration. The RuvB motors rotate together with the DNA substrate, which together with the progressing nucleotide cycle form the mechanistic basis for DNA recombination by continuous HJ branch migration. Branch migration allows RuvC to scan DNA until it finds its consensus sequence, where it cleaves and resolves cruciform DNA. The sequence is that of Holliday junction branch migration complex subunit RuvB from Photorhabdus laumondii subsp. laumondii (strain DSM 15139 / CIP 105565 / TT01) (Photorhabdus luminescens subsp. laumondii).